Reading from the N-terminus, the 189-residue chain is Elongation factor P-like protein (189 aa).

Belongs to the elongation factor P family.

In Vibrio atlanticus (strain LGP32) (Vibrio splendidus (strain Mel32)), this protein is Elongation factor P-like protein.